The sequence spans 429 residues: Adenylosuccinate synthetase (429 aa).

Residues glycine 13–lysine 19 and glycine 41–threonine 43 each bind GTP. The active-site Proton acceptor is the aspartate 14. 2 residues coordinate Mg(2+): aspartate 14 and glycine 41. IMP is bound by residues aspartate 14–lysine 17, asparagine 39–histidine 42, threonine 130, arginine 144, glutamine 224, threonine 239, and arginine 303. The active-site Proton donor is histidine 42. Alanine 299–arginine 305 is a substrate binding site. Residues arginine 305, lysine 331 to aspartate 333, and serine 412 to glycine 414 each bind GTP.

It belongs to the adenylosuccinate synthetase family. Homodimer. Requires Mg(2+) as cofactor.

Its subcellular location is the cytoplasm. The catalysed reaction is IMP + L-aspartate + GTP = N(6)-(1,2-dicarboxyethyl)-AMP + GDP + phosphate + 2 H(+). It participates in purine metabolism; AMP biosynthesis via de novo pathway; AMP from IMP: step 1/2. Functionally, plays an important role in the de novo pathway of purine nucleotide biosynthesis. Catalyzes the first committed step in the biosynthesis of AMP from IMP. This is Adenylosuccinate synthetase from Psychrobacter cryohalolentis (strain ATCC BAA-1226 / DSM 17306 / VKM B-2378 / K5).